The sequence spans 439 residues: Hydrogenobyrinate a,c-diamide synthase (439 aa).

A GATase cobBQ-type domain is found at 247-439; it reads RIALAEDGAF…FFHAIARASA (193 aa). Cysteine 329 acts as the Nucleophile in catalysis.

Belongs to the CobB/CbiA family. It depends on Mg(2+) as a cofactor.

The enzyme catalyses hydrogenobyrinate + 2 L-glutamine + 2 ATP + 2 H2O = hydrogenobyrinate a,c-diamide + 2 L-glutamate + 2 ADP + 2 phosphate + 2 H(+). The protein operates within cofactor biosynthesis; adenosylcobalamin biosynthesis; cob(II)yrinate a,c-diamide from precorrin-2 (aerobic route): step 9/10. Functionally, catalyzes the ATP-dependent amidation of the two carboxylate groups at positions a and c of hydrogenobyrinate, using either L-glutamine or ammonia as the nitrogen source. The polypeptide is Hydrogenobyrinate a,c-diamide synthase (Mesorhizobium japonicum (strain LMG 29417 / CECT 9101 / MAFF 303099) (Mesorhizobium loti (strain MAFF 303099))).